A 213-amino-acid polypeptide reads, in one-letter code: High frequency lysogenization protein HflD homolog (213 aa).

Residues 79–126 (QGLNAELTRYTLSLMVLERKLSSAKGALDTLGNRINGLQRQLEHFDLQ) adopt a coiled-coil conformation.

Belongs to the HflD family.

The protein localises to the cytoplasm. It is found in the cell inner membrane. In Shigella boydii serotype 18 (strain CDC 3083-94 / BS512), this protein is High frequency lysogenization protein HflD homolog.